Reading from the N-terminus, the 237-residue chain is Ribonuclease PH (237 aa).

Residues R86 and 124-126 each bind phosphate; that span reads GTR.

Belongs to the RNase PH family. As to quaternary structure, homohexameric ring arranged as a trimer of dimers.

The catalysed reaction is tRNA(n+1) + phosphate = tRNA(n) + a ribonucleoside 5'-diphosphate. In terms of biological role, phosphorolytic 3'-5' exoribonuclease that plays an important role in tRNA 3'-end maturation. Removes nucleotide residues following the 3'-CCA terminus of tRNAs; can also add nucleotides to the ends of RNA molecules by using nucleoside diphosphates as substrates, but this may not be physiologically important. Probably plays a role in initiation of 16S rRNA degradation (leading to ribosome degradation) during starvation. The protein is Ribonuclease PH of Shewanella loihica (strain ATCC BAA-1088 / PV-4).